Here is a 322-residue protein sequence, read N- to C-terminus: Malate dehydrogenase 1 (322 aa).

NAD(+) contacts are provided by residues 10-15 (GSGQIG) and D34. Residues R83 and R89 each coordinate substrate. NAD(+)-binding positions include N96 and 119 to 121 (ITN). Residues N121 and R152 each contribute to the substrate site. H176 (proton acceptor) is an active-site residue.

Belongs to the LDH/MDH superfamily. MDH type 3 family.

It carries out the reaction (S)-malate + NAD(+) = oxaloacetate + NADH + H(+). In terms of biological role, catalyzes the reversible oxidation of malate to oxaloacetate. This is Malate dehydrogenase 1 from Rhodopseudomonas palustris (strain BisB18).